We begin with the raw amino-acid sequence, 241 residues long: Zinc finger CCHC domain-containing protein 24 (241 aa).

2 positions are modified to phosphoserine: Ser-65 and Ser-93. A CCHC-type zinc finger spans residues Tyr-132 to Gln-149.

This Mus musculus (Mouse) protein is Zinc finger CCHC domain-containing protein 24.